Here is a 183-residue protein sequence, read N- to C-terminus: Large ribosomal subunit protein uL6 (183 aa).

Belongs to the universal ribosomal protein uL6 family. In terms of assembly, part of the 50S ribosomal subunit.

Functionally, this protein binds to the 23S rRNA, and is important in its secondary structure. It is located near the subunit interface in the base of the L7/L12 stalk, and near the tRNA binding site of the peptidyltransferase center. The chain is Large ribosomal subunit protein uL6 from Parabacteroides distasonis (strain ATCC 8503 / DSM 20701 / CIP 104284 / JCM 5825 / NCTC 11152).